Here is a 113-residue protein sequence, read N- to C-terminus: uncharacterized protein (113 aa).

The next 3 helical transmembrane spans lie at 9-31, 36-58, and 71-90; these read IFPS…SVIY, VLTI…YKFQ, and IMAL…VVAV.

It is found in the cell membrane. This is an uncharacterized protein from Archaeoglobus fulgidus (strain ATCC 49558 / DSM 4304 / JCM 9628 / NBRC 100126 / VC-16).